Consider the following 213-residue polypeptide: Maleylacetoacetate isomerase (213 aa).

Positions 3–84 (NETVLYDYWR…YLAETRDGTG (82 aa)) constitute a GST N-terminal domain. The GST C-terminal domain maps to 89-213 (HPIDRQRVRA…QRAHPDRAKP (125 aa)).

It belongs to the GST superfamily. Zeta family.

The enzyme catalyses 4-maleylacetoacetate = 4-fumarylacetoacetate. The protein operates within amino-acid degradation; L-phenylalanine degradation; acetoacetate and fumarate from L-phenylalanine: step 5/6. The sequence is that of Maleylacetoacetate isomerase (maiA) from Rhizobium meliloti (strain 1021) (Ensifer meliloti).